The primary structure comprises 306 residues: Diterpene cyclase eriG (306 aa).

2 consecutive transmembrane segments (helical) span residues 13–33 and 43–63; these read IFFGFSWRDWSTTIIPGSIFA and ATLVKNYLFLVTWLTPYIYFF. Asn64 is a glycosylation site (N-linked (GlcNAc...) asparagine). 4 helical membrane-spanning segments follow: residues 115-135, 161-181, 213-233, and 265-285; these read FLPETLCWIATVAFLCLTSYG, IAPATPTSDAWVYAVSVWAGL, LIITFFALPAACWVLSLAGIF, and MFYTYIFCLILAFCALDGLGL.

It belongs to the UbiA prenyltransferase family. Requires Mg(2+) as cofactor.

The protein localises to the membrane. The catalysed reaction is (2E,6E,10E)-geranylgeranyl diphosphate = (-)-cyatha-3,12-diene + diphosphate. The protein operates within secondary metabolite biosynthesis. EDTA completely blocks the reaction. Functionally, diterpene cyclase; part of the gene cluster that mediates the biosynthesis of erinacines, cyathane-xylosides that show unique biological activities, including leishmanicidal activity, stimulating activity for nerve growth-factor synthesis, and agonistic activity toward the kappa opioid receptor. Within the pathway, eriG acts as a diterpene cyclase that converts geranylgeranyl diphosphate (GGPP) into cyatha-3,12-diene. EriG is unable to use geranyl diphosphate (GPP) or farnesyl diphosphate (FPP) as substrates. The first step of the erinacines biosynthesis pathway is catalyzed by the geranylgeranyl diphosphate (GGPP) synthase eriE via conversion of farnesyl pyrophosphate and isopentyl pyrophosphate into geranylgeranyl pyrophosphate (GGPP). GGPP is then substrate of the diterpene cyclase eriG for the production of cyatha-3,12-diene. The cytochrome P450 monooxygenase eriI then hydroxylates cyatha-3,12-diene at C-14 of the seven-membered ring to produce erinacol, which is further hydroxylated at C-15 by the cytochrome P450 monooxygenase eriC to yield cyathadiol. The cytochrome P450 monooxygenase eriA then catalyzes C-11 hydroxylation in the presence of the short chain dehydrogenase/reductase (SDR) eriH, which leads to the production of cyathatriol. The acetyltransferase eriL converts cyathatriol into 11-O-acetyl-cyathatriol. The SDR eriH catalyzes further oxidation of 11-O-acetyl-cyathatriol into 1-O-acetylcyathin A3. Finally, the glycosyl transferase eriJ tranfers xylose from UDP-xylose onto C-14 of 11-O-acetyl-cyathatriol to form eracine Q. EriJ is also able to convert 11-O-acetyl-cyathatriol to eracine Q2 by using UDP-D-glucose as cosubstrate, but at a lower rate. The sequence is that of Diterpene cyclase eriG from Hericium erinaceus (Lion's mane mushroom).